We begin with the raw amino-acid sequence, 432 residues long: Transcriptional adapter 3 (432 aa).

Lysine 21 is covalently cross-linked (Glycyl lysine isopeptide (Lys-Gly) (interchain with G-Cter in SUMO2)). Positions 40 to 69 form a coiled coil; the sequence is IEELDTLQLELETLLSSASRRLRVLEAETQ. The segment at 87–127 is disordered; the sequence is ARDHELGAPPKHGKPKKQKLEGKTGHGPGPGPGRPKSKNVQ. Lysine 129 participates in a covalent cross-link: Glycyl lysine isopeptide (Lys-Gly) (interchain with G-Cter in SUMO2). Residues 272–319 are disordered; it reads NIISPMEDSPIPDMSGKESGADGASTSPRNQNKPFSVPHTKSLESRIK. Phosphoserine occurs at positions 280 and 298. The span at 295–305 shows a compositional bias: polar residues; sequence ASTSPRNQNKP. A coiled-coil region spans residues 367–407; sequence LLRLAKEEVSRQELRQRVRMADNEVMDAFRKIMAARQKKRT. An N6-acetyllysine modification is found at lysine 418.

Belongs to the NGG1 family. As to quaternary structure, the PCAF complex is composed of a number of TBP-associated factors (TAFS), such as TAF5, TAF5L, TAF6, TAF6L, TAF9, TAF10 and TAF12, PCAF, and also PCAF-associated factors (PAFs), such as TADA2L/ADA2, TADA3L/ADA3 and SPT3. Interacts directly with TADA2L and PCAF and also with the high-risk HPV oncoprotein E6. Component of the STAGA transcription coactivator-HAT complex, at least composed of SUPT3H, GCN5L2, TAF5L, TAF6L, SUPT7L, TADA3L, TAD1L, TAF10, TAF12, TRRAP and TAF9. Component of the TFTC-HAT complex. Component of the ADA2A-containing complex (ATAC), composed of KAT14, KAT2A, TADA2L, TADA3L, ZZ3, MBIP, WDR5, YEATS2, CCDC101 and DR1.

The protein localises to the nucleus. Its function is as follows. Functions as a component of the PCAF complex. The PCAF complex is capable of efficiently acetylating histones in a nucleosomal context. The PCAF complex could be considered as the human version of the yeast SAGA complex. Also known as a coactivator for p53/TP53-dependent transcriptional activation. Component of the ATAC complex, a complex with histone acetyltransferase activity on histones H3 and H4. In Rattus norvegicus (Rat), this protein is Transcriptional adapter 3 (Tada3).